We begin with the raw amino-acid sequence, 349 residues long: Gibberellin 3-beta-dioxygenase 3 (349 aa).

Residues 201 to 305 form the Fe2OG dioxygenase domain; it reads SIQSFLQLNS…RVSAAYFAGP (105 aa). Residues H226, D228, and H286 each coordinate Fe cation. R296 is a catalytic residue.

Belongs to the iron/ascorbate-dependent oxidoreductase family. GA3OX subfamily. It depends on L-ascorbate as a cofactor. Fe cation is required as a cofactor. Expressed in flower clusters and siliques.

It carries out the reaction gibberellin A20 + 2-oxoglutarate + O2 = gibberellin A1 + succinate + CO2. Its pathway is plant hormone biosynthesis; gibberellin biosynthesis. In terms of biological role, converts the inactive gibberellin (GA) precursors GA9 and GA20 in the bioactives gibberellins GA4 and GA1. Involved in the production of bioactive GA for reproductive development. The chain is Gibberellin 3-beta-dioxygenase 3 (GA3OX3) from Arabidopsis thaliana (Mouse-ear cress).